Here is a 504-residue protein sequence, read N- to C-terminus: AMP phosphorylase 1 (504 aa).

Residues G169, 195–200 (SRAITS), and T204 contribute to the AMP site. Catalysis depends on D257, which acts as the Proton donor. AMP-binding residues include S265 and K289.

It belongs to the thymidine/pyrimidine-nucleoside phosphorylase family. Type 2 subfamily.

It catalyses the reaction AMP + phosphate = alpha-D-ribose 1,5-bisphosphate + adenine. The enzyme catalyses CMP + phosphate = cytosine + alpha-D-ribose 1,5-bisphosphate. It carries out the reaction UMP + phosphate = alpha-D-ribose 1,5-bisphosphate + uracil. Functionally, catalyzes the conversion of AMP and phosphate to adenine and ribose 1,5-bisphosphate (R15P). Exhibits phosphorylase activity toward CMP and UMP in addition to AMP. Functions in an archaeal AMP degradation pathway, together with R15P isomerase and RubisCO. This is AMP phosphorylase 1 from Archaeoglobus fulgidus (strain ATCC 49558 / DSM 4304 / JCM 9628 / NBRC 100126 / VC-16).